Here is a 169-residue protein sequence, read N- to C-terminus: Peptide methionine sulfoxide reductase MsrA 1 (169 aa).

The active site involves cysteine 12.

The protein belongs to the MsrA Met sulfoxide reductase family.

It catalyses the reaction L-methionyl-[protein] + [thioredoxin]-disulfide + H2O = L-methionyl-(S)-S-oxide-[protein] + [thioredoxin]-dithiol. The catalysed reaction is [thioredoxin]-disulfide + L-methionine + H2O = L-methionine (S)-S-oxide + [thioredoxin]-dithiol. Its function is as follows. Has an important function as a repair enzyme for proteins that have been inactivated by oxidation. Catalyzes the reversible oxidation-reduction of methionine sulfoxide in proteins to methionine. The protein is Peptide methionine sulfoxide reductase MsrA 1 (msrA1) of Staphylococcus aureus (strain Mu50 / ATCC 700699).